The chain runs to 443 residues: ATP-dependent protease ATPase subunit HslU (443 aa).

Residues Ile19, 61 to 66 (GVGKTE), Asp256, Glu321, and Arg393 each bind ATP.

This sequence belongs to the ClpX chaperone family. HslU subfamily. A double ring-shaped homohexamer of HslV is capped on each side by a ring-shaped HslU homohexamer. The assembly of the HslU/HslV complex is dependent on binding of ATP.

It localises to the cytoplasm. Its function is as follows. ATPase subunit of a proteasome-like degradation complex; this subunit has chaperone activity. The binding of ATP and its subsequent hydrolysis by HslU are essential for unfolding of protein substrates subsequently hydrolyzed by HslV. HslU recognizes the N-terminal part of its protein substrates and unfolds these before they are guided to HslV for hydrolysis. The polypeptide is ATP-dependent protease ATPase subunit HslU (Ralstonia nicotianae (strain ATCC BAA-1114 / GMI1000) (Ralstonia solanacearum)).